Here is a 472-residue protein sequence, read N- to C-terminus: MTRVLSVASECAPLVKTGGLADVVGALPGAMAALGDELRTLVPGYATMPVVGGAVVAAFDDLFGGPATVDALTHEGLDLLILRAPHLFDRPGGLYIDAFGADWPDNAERFAALSYAAAHVAAKGAGDWRADVVHGHDWQAGLVPEYLAGLGCDTPFILTIHNVAFHGNTGAEKLDALRLDPDRFNADQYEFWGQISALKAGLMGAAQITTVSQTYAEELMTPQFGMGMDGVLRHRRDALTGIVNGIDLDVWNPETDPQITPYTTFKGKAANKAALQAEFGLSKAPGPLCVLVSRLTDQKGIDLLLDAMHVVLERGGQVAVLGSGAPDLEVCLLERADAEPNLAVKIGYDEALSHRMMAGGDCILVPSRFEPCGLTQLYGLRYGTLPLVALTGGLADTVINASPAALARRVATGIQFSPITAEALANAFSRLCDLYADRKTWTAMVRNAMKQPVGWDMSASRYHALYKATARK.

Position 16 (K16) interacts with ADP-alpha-D-glucose.

The protein belongs to the glycosyltransferase 1 family. Bacterial/plant glycogen synthase subfamily.

The enzyme catalyses [(1-&gt;4)-alpha-D-glucosyl](n) + ADP-alpha-D-glucose = [(1-&gt;4)-alpha-D-glucosyl](n+1) + ADP + H(+). It participates in glycan biosynthesis; glycogen biosynthesis. Its function is as follows. Synthesizes alpha-1,4-glucan chains using ADP-glucose. The sequence is that of Glycogen synthase from Jannaschia sp. (strain CCS1).